Consider the following 101-residue polypeptide: uncharacterized protein (101 aa).

2 consecutive transmembrane segments (helical) span residues 35–55 and 66–86; these read LWTM…LIII and FLFF…TLLF.

It is found in the membrane. This is an uncharacterized protein from Saccharomyces cerevisiae (strain ATCC 204508 / S288c) (Baker's yeast).